The sequence spans 1017 residues: uncharacterized protein (1017 aa).

Residues 1–34 constitute a signal peptide (tat-type signal); the sequence is MGNLTMSRRTFVKTAAITGAAAAAFGASTHTALA. Residues 45–103 form the 4Fe-4S Mo/W bis-MGD-type domain; the sequence is DTVAVKTCCRGCGKMECGVKVIVQNGRAIRVEGDEGAFQSMGNCCTKSQSSIQAAYHPD. Residues cysteine 53, cysteine 56, cysteine 61, and cysteine 89 each contribute to the [4Fe-4S] cluster site. Lysine 91 acts as the Electron donor/acceptor in catalysis.

This sequence belongs to the prokaryotic molybdopterin-containing oxidoreductase family. [4Fe-4S] cluster is required as a cofactor. The cofactor is Mo-bis(molybdopterin guanine dinucleotide). Predicted to be exported by the Tat system. The position of the signal peptide cleavage has not been experimentally proven.

This is an uncharacterized protein from Eggerthella lenta (strain ATCC 25559 / DSM 2243 / CCUG 17323 / JCM 9979 / KCTC 3265 / NCTC 11813 / VPI 0255 / 1899 B) (Eubacterium lentum).